An 88-amino-acid polypeptide reads, in one-letter code: Large ribosomal subunit protein bL27 (88 aa).

Residues 1 to 13 (MATKKGASSSSNG) are compositionally biased toward polar residues. The disordered stretch occupies residues 1-25 (MATKKGASSSSNGRDSEAKRLGVKR).

Belongs to the bacterial ribosomal protein bL27 family.

The chain is Large ribosomal subunit protein bL27 from Corynebacterium efficiens (strain DSM 44549 / YS-314 / AJ 12310 / JCM 11189 / NBRC 100395).